Reading from the N-terminus, the 457-residue chain is F-box only protein 13 (457 aa).

The region spanning 64-110 (EFPMDDLNDDVLERVLSWLPTSCFFRMSSVCKRWKSSQTSKSFKLAC) is the F-box domain.

The chain is F-box only protein 13 (FBX13) from Arabidopsis thaliana (Mouse-ear cress).